Consider the following 135-residue polypeptide: UPF0738 protein Aflv_2116 (135 aa).

Belongs to the UPF0738 family.

The protein is UPF0738 protein Aflv_2116 of Anoxybacillus flavithermus (strain DSM 21510 / WK1).